The chain runs to 498 residues: Glycerol kinase (498 aa).

Threonine 12 serves as a coordination point for ADP. Threonine 12, threonine 13, and serine 14 together coordinate ATP. Threonine 12 is a sn-glycerol 3-phosphate binding site. Arginine 16 provides a ligand contact to ADP. 4 residues coordinate sn-glycerol 3-phosphate: arginine 82, glutamate 83, tyrosine 135, and aspartate 245. Positions 82, 83, 135, 245, and 246 each coordinate glycerol. The ADP site is built by threonine 267 and glycine 310. Threonine 267, glycine 310, glutamine 314, and glycine 411 together coordinate ATP. The ADP site is built by glycine 411 and asparagine 415.

The protein belongs to the FGGY kinase family. Homotetramer and homodimer (in equilibrium).

It catalyses the reaction glycerol + ATP = sn-glycerol 3-phosphate + ADP + H(+). It functions in the pathway polyol metabolism; glycerol degradation via glycerol kinase pathway; sn-glycerol 3-phosphate from glycerol: step 1/1. Its activity is regulated as follows. Activated by phosphorylation and inhibited by fructose 1,6-bisphosphate (FBP). In terms of biological role, key enzyme in the regulation of glycerol uptake and metabolism. Catalyzes the phosphorylation of glycerol to yield sn-glycerol 3-phosphate. The chain is Glycerol kinase from Clostridium botulinum (strain Eklund 17B / Type B).